The sequence spans 513 residues: Tyrosine-protein phosphatase non-receptor type substrate 1 (513 aa).

Positions 1-31 (MEPAGPAPGRLGPLLLCLLLSASCFCTGATG) are cleaved as a signal peptide. The region spanning 32–137 (KELKVTQPEK…SSEPDTEIQS (106 aa)) is the Ig-like V-type domain. Residues 32–373 (KELKVTQPEK…PDNNATHNWN (342 aa)) lie on the Extracellular side of the membrane. N-linked (GlcNAc...) asparagine glycans are attached at residues N54, N92, N168, N180, N205, N209, N246, N271, N293, N302, N312, N320, N345, and N367. A disulfide bond links C55 and C121. Ig-like C1-type domains lie at 149 to 248 (PSPP…ANLS) and 255 to 343 (PTVK…PAIT). C171 and C229 are oxidised to a cystine. Cysteines 274 and 332 form a disulfide. The helical transmembrane segment at 374-394 (VFIGVGVACALLVVLLMAALY) threads the bilayer. At 395 to 511 (LLRIKQKKAK…FSEYASVQVQ (117 aa)) the chain is on the cytoplasmic side. A Phosphotyrosine; by Tyr-kinases modification is found at Y440. An SH2-binding motif is present at residues 440 to 443 (YADL). Residues 444–513 (NLPKEKKPAP…EYASVQVQRK (70 aa)) are disordered. The SH3-binding signature appears at 450 to 455 (KPAPRA). Phosphotyrosine; by Tyr-kinases is present on residues Y464, Y481, and Y505. 3 consecutive short sequence motifs (SH2-binding) follow at residues 464–467 (YASI), 481–484 (YADL), and 505–508 (YASV). The span at 504–513 (EYASVQVQRK) shows a compositional bias: polar residues.

In terms of assembly, binds PTPN11 when tyrosine-phosphorylated, except in macrophages, where it primarily binds PTPN6. Binds GRB2 vitro. Binds FGR. Binds JAK2 irrespective of its phosphorylation status and forms a stable complex. Binds SCAP1 and/or SCAP2. The resulting complex recruits FYB1. Binds PTK2B. Interacts with TRIM2. N-glycosylated. In terms of processing, phosphorylated on tyrosine residues. Highly expressed in cerebral cortex, brain, spinal cord, cerebellum and spleen, and at much lower levels in kidney, thymus, heart, lung and liver. Within the cerebellum, highly expressed throughout the molecular layer, and in synaptic glomeruli in the granule cell layer. Detected in neurons of the hippocampus and dentate gyrus, and in olfactory bulb. Not detected in Purkinje cells. Highly expressed in the plexiform layers, optic fiber layer and the outer segments of the photoreceptor layer in the retina. Highly expressed in macrophages. Isoform 3 is detected at very low levels in all tissues tested.

The protein localises to the membrane. Immunoglobulin-like cell surface receptor for CD47. Acts as a docking protein and induces translocation of PTPN6, PTPN11 and other binding partners from the cytosol to the plasma membrane. Supports adhesion of cerebellar neurons, neurite outgrowth and glial cell attachment. May play a key role in intracellular signaling during synaptogenesis and in synaptic function. Involved in the negative regulation of receptor tyrosine kinase-coupled cellular responses induced by cell adhesion, growth factors or insulin. Mediates negative regulation of phagocytosis, mast cell activation and dendritic cell activation. CD47 binding prevents maturation of immature dendritic cells and inhibits cytokine production by mature dendritic cells. Plays a role in antiviral immunity and limits new world arenavirus infection by decreasing virus internalization. Receptor for THBS1. Interaction with THBS1 stimulates phosphorylation of SIRPA. In response to THBS1, involved in ROS signaling in non-phagocytic cells, stimulating NADPH oxidase-derived ROS production. The sequence is that of Tyrosine-protein phosphatase non-receptor type substrate 1 (Sirpa) from Mus musculus (Mouse).